Consider the following 169-residue polypeptide: Cell division inhibitor SulA (169 aa).

Positions Ala106–Tyr112 are ftsZ binding. The lon protease binding stretch occupies residues Lys162–His169.

This sequence belongs to the SulA family. In terms of assembly, interacts with FtsZ. Is rapidly cleaved and degraded by the Lon protease once DNA damage is repaired.

In terms of biological role, component of the SOS system and an inhibitor of cell division. Accumulation of SulA causes rapid cessation of cell division and the appearance of long, non-septate filaments. In the presence of GTP, binds a polymerization-competent form of FtsZ in a 1:1 ratio, thus inhibiting FtsZ polymerization and therefore preventing it from participating in the assembly of the Z ring. This mechanism prevents the premature segregation of damaged DNA to daughter cells during cell division. This is Cell division inhibitor SulA from Salmonella dublin (strain CT_02021853).